The primary structure comprises 675 residues: uncharacterized protein (675 aa).

Transmembrane regions (helical) follow at residues 2-22 (QHTFIYDTCLWILSILIDFFF), 397-417 (LFLLALGALPGAILFSPVFIA), 448-468 (LLVALGMTPILYSFYALLCCY), and 481-501 (IFVYTVPIISTFLFPMVTYAA). 2 disordered regions span residues 616 to 635 (YSPNPSALPPSDEEEKDIND) and 646 to 675 (QRMGQRMTEIRSRDTPPEEVFSESDEELSD). Residues 665 to 675 (VFSESDEELSD) are compositionally biased toward acidic residues. The residue at position 669 (Ser669) is a Phosphoserine.

Belongs to the 1-acyl-sn-glycerol-3-phosphate acyltransferase family.

The protein localises to the endoplasmic reticulum membrane. This is an uncharacterized protein from Schizosaccharomyces pombe (strain 972 / ATCC 24843) (Fission yeast).